A 220-amino-acid chain; its full sequence is Type II restriction enzyme NspV (220 aa).

It carries out the reaction Endonucleolytic cleavage of DNA to give specific double-stranded fragments with terminal 5'-phosphates.. Its function is as follows. A P subtype restriction enzyme that recognizes the double-stranded sequence 5'-TTCGAA-3' and cleaves after T-2. The polypeptide is Type II restriction enzyme NspV (Nostoc sp. (strain ATCC 29411 / PCC 7524)).